The primary structure comprises 317 residues: Mitochondrial thiamine pyrophosphate carrier 1 (317 aa).

Solcar repeat units follow at residues 12 to 110 (GTRR…TTQV), 120 to 206 (PPAL…LRPV), and 214 to 309 (PFGS…SLKL). 6 helical membrane-spanning segments follow: residues 17-35 (VVLSGGIAGLVSRFCVAPL), 91-107 (LMYVCYGALQFTAYRTT), 126-146 (FVSGAVAGGLATASTYPLDLL), 181-198 (GCSAAVGQIVPYMGLFFA), 220-240 (AAAGVIASVLAKTGVFPLDLV), and 284-301 (GLTVSLIKAAPASAITMW).

It belongs to the mitochondrial carrier (TC 2.A.29) family.

The protein resides in the mitochondrion inner membrane. In terms of biological role, mitochondrial transporter that mediates uptake of thiamine pyrophosphate (ThPP) into mitochondria. The polypeptide is Mitochondrial thiamine pyrophosphate carrier 1 (tpc1) (Neosartorya fischeri (strain ATCC 1020 / DSM 3700 / CBS 544.65 / FGSC A1164 / JCM 1740 / NRRL 181 / WB 181) (Aspergillus fischerianus)).